The sequence spans 144 residues: Transcription antitermination protein NusB (144 aa).

The protein belongs to the NusB family.

In terms of biological role, involved in transcription antitermination. Required for transcription of ribosomal RNA (rRNA) genes. Binds specifically to the boxA antiterminator sequence of the ribosomal RNA (rrn) operons. The chain is Transcription antitermination protein NusB from Paraburkholderia phytofirmans (strain DSM 17436 / LMG 22146 / PsJN) (Burkholderia phytofirmans).